A 785-amino-acid polypeptide reads, in one-letter code: uncharacterized protein (785 aa).

The 93-residue stretch at 1–93 (MSWVMVSPEL…GGAYAAAEAA (93 aa)) folds into the PE domain.

This sequence belongs to the mycobacterial PE family. PGRS subfamily.

This is an uncharacterized protein from Mycobacterium tuberculosis (strain CDC 1551 / Oshkosh).